The primary structure comprises 1082 residues: TNF receptor-associated factor homolog 1b (1082 aa).

Residues 1–54 (MAEAVDEDSGVGRSLEESSNGQHSQAGEALSEWRSSGQVENGTPSTSPSYWDID) form a disordered region. Alanine 2 carries the post-translational modification N-acetylalanine. Polar residues predominate over residues 33-49 (WRSSGQVENGTPSTSPS). The MATH domain occupies 67–198 (YGQYTWKIPK…SGCLTIEAKV (132 aa)). Disordered stretches follow at residues 358 to 388 (LPPK…ERDE), 440 to 666 (TEQR…SNVG), 697 to 762 (SIVN…QVVL), 780 to 800 (LSAP…APII), 812 to 841 (SSVQ…NQQT), and 858 to 889 (SSSS…PTSS). Basic and acidic residues-rich tracts occupy residues 359 to 388 (PPKD…ERDE) and 440 to 453 (TEQR…EREK). Residues 446–507 (RGAAEREKKS…EEEKDSVTEK (62 aa)) are a coiled coil. A compositionally biased stretch (basic residues) spans 454–471 (KSKKKQAKQKRNKNKGKD). A compositionally biased stretch (basic and acidic residues) spans 472 to 488 (KRKEEKVSFATHAKDLE). Low complexity-rich tracts occupy residues 519-534 (GDVS…SADI) and 560-573 (SSEG…ISIS). Composition is skewed to polar residues over residues 588–630 (DDSS…QQVK) and 645–666 (QPST…SNVG). Low complexity-rich tracts occupy residues 858 to 871 (SSSS…SSHG) and 878 to 889 (PSSSYSQAPTSS).

Forms homooligomers. Interacts with SNC1, RPS2 and CPR1/CPR30. Interacts with ATG6.

The protein resides in the cytoplasm. The protein localises to the cell membrane. In terms of biological role, functions redundantly with TRAF1A in the regulation of plant immune response. Contributes to the turnover of the nucleotide-binding domain and leucine-rich repeat-containing (NB-LRR) immune receptors SNC1 and RPS2. May associate with an E3 ubiquitin-protein ligase complex, which modulates ubiquitination and subsequent degradation of NB-LRR immune sensors to maintain their homeostasis. Functions redundantly with TRAF1A in the regulation of autophagosome formation. Required for SINAT1- and SINAT2-mediated ubiquitination and destabilization of ATG6. Functions as a molecular adapter that helps to regulate autophagy by modulating ATG6 stability. This Arabidopsis thaliana (Mouse-ear cress) protein is TNF receptor-associated factor homolog 1b.